The primary structure comprises 421 residues: MGKLVVQGGTVLEGEVEISGSKNAALPIMAAAILCDEEIILKNVPRLQDVFVMIDILRSIGFRVEFDENELKIKRENDISQEVPYELVRKMRASFNVLGPIAVRTGRAKVALPGGCSIGVRPVDFHLEGLKKMGFSIKVEHGFVEATFERRTDQVTITLPFPSVGATEHLMTTAALLEGTRVVIENAAMEPEIVDLQNFINRMGGRIEGAGTSRIVIEGVEKMQGVEYSIIPDRIEAGTYLVAIAASRGKGLVKNVNPDHLTNFFEKLEETGVKLKVFGNEVEIEMRERPEAVDVTTNPYPGFPTDLQPQMMAYLSIASGVSVITENVFKTRFLHVDELKRMGADIEVSGNVAIVKGVEKLSGAPVEGTDLRATAALLIAGIIADGVTEISNVEHIFRGYEDVIDKFSKLGAKIEYVEKEN.

22–23 (KN) serves as a coordination point for phosphoenolpyruvate. Arg-92 provides a ligand contact to UDP-N-acetyl-alpha-D-glucosamine. The Proton donor role is filled by Cys-116. Cys-116 is subject to 2-(S-cysteinyl)pyruvic acid O-phosphothioketal. UDP-N-acetyl-alpha-D-glucosamine contacts are provided by Asp-306 and Val-328.

The protein belongs to the EPSP synthase family. MurA subfamily.

The protein localises to the cytoplasm. It carries out the reaction phosphoenolpyruvate + UDP-N-acetyl-alpha-D-glucosamine = UDP-N-acetyl-3-O-(1-carboxyvinyl)-alpha-D-glucosamine + phosphate. Its pathway is cell wall biogenesis; peptidoglycan biosynthesis. Its function is as follows. Cell wall formation. Adds enolpyruvyl to UDP-N-acetylglucosamine. This is UDP-N-acetylglucosamine 1-carboxyvinyltransferase from Thermotoga petrophila (strain ATCC BAA-488 / DSM 13995 / JCM 10881 / RKU-1).